The primary structure comprises 254 residues: 4-hydroxy-tetrahydrodipicolinate reductase (254 aa).

Residues 8-13 (GASGKM), 87-89 (GTT), and 111-114 (ATNM) contribute to the NAD(+) site. His143 functions as the Proton donor/acceptor in the catalytic mechanism. His144 contributes to the (S)-2,3,4,5-tetrahydrodipicolinate binding site. The active-site Proton donor is Lys147. 153 to 154 (GT) is a binding site for (S)-2,3,4,5-tetrahydrodipicolinate.

This sequence belongs to the DapB family.

The protein resides in the cytoplasm. It catalyses the reaction (S)-2,3,4,5-tetrahydrodipicolinate + NAD(+) + H2O = (2S,4S)-4-hydroxy-2,3,4,5-tetrahydrodipicolinate + NADH + H(+). The enzyme catalyses (S)-2,3,4,5-tetrahydrodipicolinate + NADP(+) + H2O = (2S,4S)-4-hydroxy-2,3,4,5-tetrahydrodipicolinate + NADPH + H(+). It functions in the pathway amino-acid biosynthesis; L-lysine biosynthesis via DAP pathway; (S)-tetrahydrodipicolinate from L-aspartate: step 4/4. Its function is as follows. Catalyzes the conversion of 4-hydroxy-tetrahydrodipicolinate (HTPA) to tetrahydrodipicolinate. This Campylobacter fetus subsp. fetus (strain 82-40) protein is 4-hydroxy-tetrahydrodipicolinate reductase.